The primary structure comprises 97 residues: Protein E7 (97 aa).

Residues 1–40 (MRGHKPTLKEYVLDLYPEPTDLYCYEQLSDSSDEDEGLDR) are E7 terminal domain. An LXCXE motif; interaction with host RB1 and TMEM173/STING motif is present at residues 22 to 26 (LYCYE). A zinc finger lies at 58–94 (CHTCNTTVRLCVNSTASDLRTIQQLLMGTVNIVCPTC). The Nuclear export signal signature appears at 76-84 (LRTIQQLLM).

The protein belongs to the papillomaviridae E7 protein family. Homodimer. Homooligomer. Interacts with host RB1; this interaction induces dissociation of RB1-E2F1 complex thereby disrupting RB1 activity. Interacts with host EP300; this interaction represses EP300 transcriptional activity. Interacts with protein E2; this interaction inhibits E7 oncogenic activity. Interacts with host TMEM173/STING; this interaction impairs the ability of TMEM173/STING to sense cytosolic DNA and promote the production of type I interferon (IFN-alpha and IFN-beta). Highly phosphorylated.

Its subcellular location is the host cytoplasm. The protein localises to the host nucleus. Functionally, plays a role in viral genome replication by driving entry of quiescent cells into the cell cycle. Stimulation of progression from G1 to S phase allows the virus to efficiently use the cellular DNA replicating machinery to achieve viral genome replication. E7 protein has both transforming and trans-activating activities. Induces the disassembly of the E2F1 transcription factor from RB1, with subsequent transcriptional activation of E2F1-regulated S-phase genes. Interferes with host histone deacetylation mediated by HDAC1 and HDAC2, leading to transcription activation. Also plays a role in the inhibition of both antiviral and antiproliferative functions of host interferon alpha. Interaction with host TMEM173/STING impairs the ability of TMEM173/STING to sense cytosolic DNA and promote the production of type I interferon (IFN-alpha and IFN-beta). In Human papillomavirus 33, this protein is Protein E7.